The primary structure comprises 287 residues: MRFIHALLLAGIAHSAYASEKLTFKTDLEKLEREKAAQIGVAIVDPQGEIVAGHRMAQRFAMCSTFKFPLAALVFERIDSGTERGDRKLSYGPDMIVEWSPATERFLASGHMTVLEAAQAAVQLSDNGATNLLLREIGGPAAMTQYFRKIGDSVSRLDRKEPEMGDNTPGDLRDTTTPIAMARTVAKVLYGGALTSTSTHTIERWLIGNQTGDATLRAGFPKDWVVGEKTGTCANGGRNDIGFFKAQERDYAVAVYTTAPKLSAVERDELVASVGQVITQLILSTDK.

An N-terminal signal peptide occupies residues 1–18; it reads MRFIHALLLAGIAHSAYA. A disulfide bridge links cysteine 63 with cysteine 233. The Nucleophile; acyl-ester intermediate role is filled by serine 64. Positions 67, 125, 161, and 232 each coordinate a beta-lactam.

It belongs to the class-A beta-lactamase family. As to quaternary structure, monomer. May form dimers.

The enzyme catalyses a beta-lactam + H2O = a substituted beta-amino acid. Its activity is regulated as follows. Inhibited by the beta-lactamase-blocking agents clavulanic acid, tazobactam, sulbactam and tazobactam and the carbapenem, imipenem. Inhibition by imipenem may involve Gly-165. Its function is as follows. Extended-spectrum beta-lactamase (ESBL) which confers resistance to penicillins, as well as first, second, third and fourth-generation cephalosporins. Has ceftazidime-hydrolyzing activity. Inactive against the carbapenems, imipenem, meropenem, ertapenem and doripenem. However, weak hydrolytic activity with respect to imipenem has also been reported. The polypeptide is Beta-lactamase GES-1 (Klebsiella pneumoniae).